The following is a 316-amino-acid chain: Vacuolar membrane protein YNL058C (316 aa).

Positions 32–60 (KPTSSVVSETSSKSLPSLTSSAFSTSSGA) are disordered. Residues 93–113 (VYIAVGAVIGAIFISILIWWL) form a helical membrane-spanning segment. S148, S256, and S276 each carry phosphoserine. The segment at 240-304 (EEEERKLNLN…KAHKRQAPSM (65 aa)) is disordered. Basic and acidic residues predominate over residues 256–271 (SPERKEKKINSMEGYH).

This sequence belongs to the PRM5 family.

It is found in the vacuole membrane. The protein is Vacuolar membrane protein YNL058C of Saccharomyces cerevisiae (strain ATCC 204508 / S288c) (Baker's yeast).